A 184-amino-acid polypeptide reads, in one-letter code: UPF0316 protein YebE (184 aa).

Transmembrane regions (helical) follow at residues glycine 9–isoleucine 29, leucine 41–leucine 61, and isoleucine 67–isoleucine 87.

The protein belongs to the UPF0316 family.

It is found in the cell membrane. In Bacillus subtilis (strain 168), this protein is UPF0316 protein YebE (yebE).